Reading from the N-terminus, the 481-residue chain is Aspartyl/glutamyl-tRNA(Asn/Gln) amidotransferase subunit B (481 aa).

It belongs to the GatB/GatE family. GatB subfamily. Heterotrimer of A, B and C subunits.

The catalysed reaction is L-glutamyl-tRNA(Gln) + L-glutamine + ATP + H2O = L-glutaminyl-tRNA(Gln) + L-glutamate + ADP + phosphate + H(+). It catalyses the reaction L-aspartyl-tRNA(Asn) + L-glutamine + ATP + H2O = L-asparaginyl-tRNA(Asn) + L-glutamate + ADP + phosphate + 2 H(+). In terms of biological role, allows the formation of correctly charged Asn-tRNA(Asn) or Gln-tRNA(Gln) through the transamidation of misacylated Asp-tRNA(Asn) or Glu-tRNA(Gln) in organisms which lack either or both of asparaginyl-tRNA or glutaminyl-tRNA synthetases. The reaction takes place in the presence of glutamine and ATP through an activated phospho-Asp-tRNA(Asn) or phospho-Glu-tRNA(Gln). This Pseudomonas putida (strain ATCC 47054 / DSM 6125 / CFBP 8728 / NCIMB 11950 / KT2440) protein is Aspartyl/glutamyl-tRNA(Asn/Gln) amidotransferase subunit B.